The sequence spans 103 residues: Small ribosomal subunit protein uS10 (103 aa).

It belongs to the universal ribosomal protein uS10 family. In terms of assembly, part of the 30S ribosomal subunit.

Its function is as follows. Involved in the binding of tRNA to the ribosomes. This Borrelia recurrentis (strain A1) protein is Small ribosomal subunit protein uS10.